The following is a 429-amino-acid chain: tRNA(Ile2) 2-agmatinylcytidine synthetase TiaS (429 aa).

A DNA-binding region (OB) is located at residues 271-343 (VRGKVIKKYW…LTLNLEKFYP (73 aa)).

It belongs to the TiaS family.

The protein resides in the cytoplasm. It catalyses the reaction cytidine(34) in tRNA(Ile2) + agmatine + ATP + H2O = 2-agmatinylcytidine(34) in tRNA(Ile2) + AMP + 2 phosphate + 2 H(+). Its function is as follows. ATP-dependent agmatine transferase that catalyzes the formation of 2-agmatinylcytidine (agm2C) at the wobble position (C34) of tRNA(Ile2), converting the codon specificity from AUG to AUA. This chain is tRNA(Ile2) 2-agmatinylcytidine synthetase TiaS, found in Thermococcus sibiricus (strain DSM 12597 / MM 739).